A 145-amino-acid chain; its full sequence is MGKIWVLHGPNLNLLGRREPDKYGTQTLDEINNELLHKAYTAGIPIQVEQTNFEGELIQWIHSMGPDDFLIINPGAWTHYSYAVRDAITSVQVPAIEVHLSNIHAREEFRKTSVIAPVCCGQISGLGGKSYSLALDYALEALTQK.

The Proton acceptor role is filled by tyrosine 23. Asparagine 73, histidine 79, and aspartate 86 together coordinate substrate. Histidine 99 (proton donor) is an active-site residue. Substrate-binding positions include 100–101 (LS) and arginine 110.

The protein belongs to the type-II 3-dehydroquinase family. As to quaternary structure, homododecamer.

The enzyme catalyses 3-dehydroquinate = 3-dehydroshikimate + H2O. It functions in the pathway metabolic intermediate biosynthesis; chorismate biosynthesis; chorismate from D-erythrose 4-phosphate and phosphoenolpyruvate: step 3/7. Its function is as follows. Catalyzes a trans-dehydration via an enolate intermediate. In Desulfitobacterium hafniense (strain DSM 10664 / DCB-2), this protein is 3-dehydroquinate dehydratase.